We begin with the raw amino-acid sequence, 332 residues long: MDKVERRLYELYEKAINYEPLSKEEALYILEVDDIYVPFLVHLAQKIKKHYFPENEVEFCSIINAKSGACSEDCKFCAQSKYYKTPINVYNLVPVDEMVEGAIRGVEFGANRYCIVLSGKSATKEEVERITEAVKEIKNEGLPINVCVSAGTLDEESLKKLKEAGVKRINHNLETSRNFFKNIVTTHTWEDRYETIKRIKKVGLSTCSGGIFGMGESNEDRVDMALTYRELEVDSIPLNFLMPIEGTPMENAPGVEVMEALKIIAMFRFTNPKAELRLCGGREQNLRDFHGMATLMTNAMMVGGYLTRAGRDIKKDYQLLKDLKAKRKVSVE.

One can recognise a Radical SAM core domain in the interval 52–282; it reads FPENEVEFCS…KAELRLCGGR (231 aa). Positions 70, 74, and 77 each coordinate [4Fe-4S] cluster. Residues cysteine 114, cysteine 147, cysteine 207, and arginine 277 each coordinate [2Fe-2S] cluster.

This sequence belongs to the radical SAM superfamily. Biotin synthase family. Homodimer. It depends on [4Fe-4S] cluster as a cofactor. [2Fe-2S] cluster is required as a cofactor.

It carries out the reaction (4R,5S)-dethiobiotin + (sulfur carrier)-SH + 2 reduced [2Fe-2S]-[ferredoxin] + 2 S-adenosyl-L-methionine = (sulfur carrier)-H + biotin + 2 5'-deoxyadenosine + 2 L-methionine + 2 oxidized [2Fe-2S]-[ferredoxin]. It participates in cofactor biosynthesis; biotin biosynthesis; biotin from 7,8-diaminononanoate: step 2/2. Catalyzes the conversion of dethiobiotin (DTB) to biotin by the insertion of a sulfur atom into dethiobiotin via a radical-based mechanism. The polypeptide is Biotin synthase (Aquifex aeolicus (strain VF5)).